The primary structure comprises 380 residues: Cytochrome b (380 aa).

4 helical membrane passes run 34-54 (FGSL…LLAA), 78-99 (WLIR…YLHI), 114-134 (WNTG…GYVL), and 179-199 (FFTL…IHLT). 2 residues coordinate heme b: His-84 and His-98. His-183 and His-197 together coordinate heme b. Residue His-202 coordinates a ubiquinone. 4 consecutive transmembrane segments (helical) span residues 227–247 (LKDI…ALFS), 289–309 (LGGV…PLLH), 321–341 (LSQL…WVGS), and 348–368 (FMII…VLFP).

It belongs to the cytochrome b family. As to quaternary structure, the cytochrome bc1 complex contains 11 subunits: 3 respiratory subunits (MT-CYB, CYC1 and UQCRFS1), 2 core proteins (UQCRC1 and UQCRC2) and 6 low-molecular weight proteins (UQCRH/QCR6, UQCRB/QCR7, UQCRQ/QCR8, UQCR10/QCR9, UQCR11/QCR10 and a cleavage product of UQCRFS1). This cytochrome bc1 complex then forms a dimer. Heme b is required as a cofactor.

Its subcellular location is the mitochondrion inner membrane. Component of the ubiquinol-cytochrome c reductase complex (complex III or cytochrome b-c1 complex) that is part of the mitochondrial respiratory chain. The b-c1 complex mediates electron transfer from ubiquinol to cytochrome c. Contributes to the generation of a proton gradient across the mitochondrial membrane that is then used for ATP synthesis. In Anthropoides virgo (Demoiselle crane), this protein is Cytochrome b (MT-CYB).